Reading from the N-terminus, the 266-residue chain is Dioicin-2 (266 aa).

2 disulfide bridges follow: cysteine 32-cysteine 263 and cysteine 85-cysteine 102. Glutamate 176 is an active-site residue.

It localises to the secreted. The protein localises to the extracellular space. It is found in the golgi apparatus. The protein resides in the vacuole. It carries out the reaction Endohydrolysis of the N-glycosidic bond at one specific adenosine on the 28S rRNA.. Functionally, nicks pBR322 dsDNA. Has adenine polynucleotide glycosidase activity on herring sperm ssDNA. The polypeptide is Dioicin-2 (Phytolacca dioica (Bella sombra tree)).